The sequence spans 37 residues: Large ribosomal subunit protein bL36c (37 aa).

This sequence belongs to the bacterial ribosomal protein bL36 family.

It localises to the plastid. Its subcellular location is the chloroplast. This chain is Large ribosomal subunit protein bL36c, found in Liriodendron tulipifera (Tuliptree).